Consider the following 343-residue polypeptide: 3-dehydroquinate synthase (343 aa).

Residues 86–90 (GALLD), 110–111 (TT), K123, and K132 each bind NAD(+). 3 residues coordinate Zn(2+): E165, H229, and H243.

The protein belongs to the sugar phosphate cyclases superfamily. Dehydroquinate synthase family. Co(2+) serves as cofactor. Zn(2+) is required as a cofactor. It depends on NAD(+) as a cofactor.

It is found in the cytoplasm. It carries out the reaction 7-phospho-2-dehydro-3-deoxy-D-arabino-heptonate = 3-dehydroquinate + phosphate. It functions in the pathway metabolic intermediate biosynthesis; chorismate biosynthesis; chorismate from D-erythrose 4-phosphate and phosphoenolpyruvate: step 2/7. Its function is as follows. Catalyzes the conversion of 3-deoxy-D-arabino-heptulosonate 7-phosphate (DAHP) to dehydroquinate (DHQ). The polypeptide is 3-dehydroquinate synthase (Pyrobaculum islandicum (strain DSM 4184 / JCM 9189 / GEO3)).